Here is a 479-residue protein sequence, read N- to C-terminus: Acyltransferase easC (479 aa).

The Proton acceptor role is filled by H161.

It belongs to the plant acyltransferase family. Monomer.

The protein operates within antibiotic biosynthesis. In terms of biological role, acyltransferase; part of the gene cluster that mediates the biosynthesis of emericellamides, secondary metabolites acting as antibiotics. The biosynthesis of emericellamides initiates from the highly reducing polyketide synthase easB which catalyzes the formation of the linear polyketide chain. EasB produces several polyketides that can be further processed by the downstream enzymes. The polyketides are released from easB as linear polyketide carboxylic acids, which are converted to CoA thioesters by the acyl-CoA ligase easD. The substrates are then loaded onto the acyltransferase easC, which shuttles them to the first thiolation (T) domain of the nonribosomal peptide synthetase easA. EasA then performs condensation of the polyketides with one glycine, two alanine, one valine and one leucine residues. A last step of cyclization leads to the production of emericellamides. The chain is Acyltransferase easC from Emericella nidulans (strain FGSC A4 / ATCC 38163 / CBS 112.46 / NRRL 194 / M139) (Aspergillus nidulans).